The primary structure comprises 480 residues: Cytochrome b-c1 complex subunit 1, mitochondrial (480 aa).

The transit peptide at 1–34 directs the protein to the mitochondrion; sequence MAASAVCRAACSGTQALLRTCRSPALLRLPALRG. Lysine 111 and lysine 138 each carry N6-acetyllysine. Lysine 163 is modified (N6-acetyllysine; alternate). At lysine 163 the chain carries N6-succinyllysine; alternate. Residue serine 212 is modified to Phosphoserine. Phosphothreonine is present on threonine 214.

It belongs to the peptidase M16 family. UQCRC1/QCR1 subfamily. As to quaternary structure, component of the ubiquinol-cytochrome c oxidoreductase (cytochrome b-c1 complex, complex III, CIII), a multisubunit enzyme composed of 11 subunits. The complex is composed of 3 respiratory subunits cytochrome b, cytochrome c1 and Rieske protein UQCRFS1, 2 core protein subunits UQCRC1/QCR1 and UQCRC2/QCR2, and 6 low-molecular weight protein subunits UQCRH/QCR6, UQCRB/QCR7, UQCRQ/QCR8, UQCR10/QCR9, UQCR11/QCR10 and subunit 9, the cleavage product of Rieske protein UQCRFS1. The complex exists as an obligatory dimer and forms supercomplexes (SCs) in the inner mitochondrial membrane with NADH-ubiquinone oxidoreductase (complex I, CI) and cytochrome c oxidase (complex IV, CIV), resulting in different assemblies (supercomplex SCI(1)III(2)IV(1) and megacomplex MCI(2)III(2)IV(2)). Interacts with UQCC6. Interacts with STMP1.

It is found in the mitochondrion inner membrane. Its function is as follows. Component of the ubiquinol-cytochrome c oxidoreductase, a multisubunit transmembrane complex that is part of the mitochondrial electron transport chain which drives oxidative phosphorylation. The respiratory chain contains 3 multisubunit complexes succinate dehydrogenase (complex II, CII), ubiquinol-cytochrome c oxidoreductase (cytochrome b-c1 complex, complex III, CIII) and cytochrome c oxidase (complex IV, CIV), that cooperate to transfer electrons derived from NADH and succinate to molecular oxygen, creating an electrochemical gradient over the inner membrane that drives transmembrane transport and the ATP synthase. The cytochrome b-c1 complex catalyzes electron transfer from ubiquinol to cytochrome c, linking this redox reaction to translocation of protons across the mitochondrial inner membrane, with protons being carried across the membrane as hydrogens on the quinol. In the process called Q cycle, 2 protons are consumed from the matrix, 4 protons are released into the intermembrane space and 2 electrons are passed to cytochrome c. The 2 core subunits UQCRC1/QCR1 and UQCRC2/QCR2 are homologous to the 2 mitochondrial-processing peptidase (MPP) subunits beta-MPP and alpha-MPP respectively, and they seem to have preserved their MPP processing properties. May be involved in the in situ processing of UQCRFS1 into the mature Rieske protein and its mitochondrial targeting sequence (MTS)/subunit 9 when incorporated into complex III. Seems to play an important role in the maintenance of proper mitochondrial function in nigral dopaminergic neurons. The sequence is that of Cytochrome b-c1 complex subunit 1, mitochondrial (Uqcrc1) from Rattus norvegicus (Rat).